Here is a 239-residue protein sequence, read N- to C-terminus: Ribonuclease PH (239 aa).

Residues Arg-86 and 124-126 contribute to the phosphate site; that span reads GTR.

This sequence belongs to the RNase PH family. Homohexameric ring arranged as a trimer of dimers.

The enzyme catalyses tRNA(n+1) + phosphate = tRNA(n) + a ribonucleoside 5'-diphosphate. In terms of biological role, phosphorolytic 3'-5' exoribonuclease that plays an important role in tRNA 3'-end maturation. Removes nucleotide residues following the 3'-CCA terminus of tRNAs; can also add nucleotides to the ends of RNA molecules by using nucleoside diphosphates as substrates, but this may not be physiologically important. Probably plays a role in initiation of 16S rRNA degradation (leading to ribosome degradation) during starvation. The protein is Ribonuclease PH of Anaeromyxobacter dehalogenans (strain 2CP-1 / ATCC BAA-258).